A 472-amino-acid chain; its full sequence is Flotillin-like protein 6 (472 aa).

Cys37 carries the S-palmitoyl cysteine lipid modification. Residues 237–327 (ENQREAEVAQ…ELYKKQKEAE (91 aa)) are a coiled coil.

Belongs to the band 7/mec-2 family. Flotillin subfamily. In terms of processing, may be palmitoylated. As to expression, very low occasional expression in roots and nodules.

Its subcellular location is the cell membrane. It localises to the membrane. The protein resides in the caveola. Its function is as follows. May act as a scaffolding protein within caveolar membranes, functionally participating in formation of caveolae or caveolae-like vesicles. May be involved in nodule formation. In Medicago truncatula (Barrel medic), this protein is Flotillin-like protein 6 (FLOT6).